The primary structure comprises 118 residues: Small ribosomal subunit protein uS13 (118 aa).

The segment at 93–118 is disordered; it reads RGLPVRGQRTKTNARTRKGPRKPIRK.

It belongs to the universal ribosomal protein uS13 family. Part of the 30S ribosomal subunit. Forms a loose heterodimer with protein S19. Forms two bridges to the 50S subunit in the 70S ribosome.

Its function is as follows. Located at the top of the head of the 30S subunit, it contacts several helices of the 16S rRNA. In the 70S ribosome it contacts the 23S rRNA (bridge B1a) and protein L5 of the 50S subunit (bridge B1b), connecting the 2 subunits; these bridges are implicated in subunit movement. Contacts the tRNAs in the A and P-sites. The protein is Small ribosomal subunit protein uS13 of Pseudomonas fluorescens (strain ATCC BAA-477 / NRRL B-23932 / Pf-5).